Here is an 87-residue protein sequence, read N- to C-terminus: Phosphoribosyl-ATP pyrophosphatase (87 aa).

This sequence belongs to the PRA-PH family.

It localises to the cytoplasm. The enzyme catalyses 1-(5-phospho-beta-D-ribosyl)-ATP + H2O = 1-(5-phospho-beta-D-ribosyl)-5'-AMP + diphosphate + H(+). It functions in the pathway amino-acid biosynthesis; L-histidine biosynthesis; L-histidine from 5-phospho-alpha-D-ribose 1-diphosphate: step 2/9. This is Phosphoribosyl-ATP pyrophosphatase from Leifsonia xyli subsp. xyli (strain CTCB07).